Reading from the N-terminus, the 617-residue chain is 1-deoxy-D-xylulose-5-phosphate synthase (617 aa).

Thiamine diphosphate-binding positions include H77 and G118–S120. Residue D149 coordinates Mg(2+). Thiamine diphosphate-binding positions include G150–A151, N178, Y286, and E367. Mg(2+) is bound at residue N178.

It belongs to the transketolase family. DXPS subfamily. As to quaternary structure, homodimer. The cofactor is Mg(2+). It depends on thiamine diphosphate as a cofactor.

The catalysed reaction is D-glyceraldehyde 3-phosphate + pyruvate + H(+) = 1-deoxy-D-xylulose 5-phosphate + CO2. It participates in metabolic intermediate biosynthesis; 1-deoxy-D-xylulose 5-phosphate biosynthesis; 1-deoxy-D-xylulose 5-phosphate from D-glyceraldehyde 3-phosphate and pyruvate: step 1/1. Its function is as follows. Catalyzes the acyloin condensation reaction between C atoms 2 and 3 of pyruvate and glyceraldehyde 3-phosphate to yield 1-deoxy-D-xylulose-5-phosphate (DXP). In Actinobacillus pleuropneumoniae serotype 5b (strain L20), this protein is 1-deoxy-D-xylulose-5-phosphate synthase.